A 172-amino-acid polypeptide reads, in one-letter code: C-phycocyanin beta subunit (172 aa).

N72 bears the N4-methylasparagine mark. C82 and C153 together coordinate (2R,3E)-phycocyanobilin.

Belongs to the phycobiliprotein family. Heterodimer of an alpha and a beta subunit, which further assembles into trimers and the trimers into hexamers. Contains two covalently linked bilin chromophores.

The protein localises to the cellular thylakoid membrane. Functionally, light-harvesting photosynthetic bile pigment-protein from the phycobiliprotein complex (phycobilisome, PBS). Phycocyanin is the major phycobiliprotein in the PBS rod. This Synechocystis sp. (strain PCC 6701) protein is C-phycocyanin beta subunit (cpcB).